The following is a 95-amino-acid chain: Feather keratin B-4 (95 aa).

Ser-1 carries the post-translational modification N-acetylserine.

The protein belongs to the avian keratin family. In terms of assembly, the avian keratins (F-ker, S-ker, C-ker and B-ker) are a complex mixture of very similar polypeptides.

In Anas platyrhynchos (Mallard), this protein is Feather keratin B-4.